The following is a 98-amino-acid chain: Large ribosomal subunit protein eL14 (98 aa).

It belongs to the eukaryotic ribosomal protein eL14 family.

This is Large ribosomal subunit protein eL14 from Thermofilum pendens (strain DSM 2475 / Hrk 5).